Consider the following 130-residue polypeptide: kinetoplast-associated protein 2-2 (130 aa).

Residues 1–10 constitute a propeptide that is removed on maturation; that stretch reads MLRRTVSNFA. Residues 95-130 form a disordered region; it reads ETKQAQRAKAQKAQKKPKSAKSKVKKAAKKAKKSKK. Over residues 103-130 the composition is skewed to basic residues; that stretch reads KAQKAQKKPKSAKSKVKKAAKKAKKSKK.

The protein belongs to the KAP family. Associates with the kinetoplast DNA network.

The protein resides in the mitochondrion matrix. Its subcellular location is the kinetoplast. Its function is as follows. Histone H1-like DNA-binding protein involved in the organization and segregation of kinetoplast DNA (kDNA). The mitochondrial DNA of kinetoplastid protozoa consists of about 5,000 minicircles and 20 to 30 maxicircles. These circular DNAs are held together by catenation into a highly organized compact disk structure referred to as a kinetoplast DNA (kDNA) network. Binds preferentially to a specific fragment of minicircle DNA and is able to compact kDNA networks through DNA charge neutralization and condensation. The polypeptide is kinetoplast-associated protein 2-2 (KAP2-2) (Crithidia fasciculata).